The chain runs to 296 residues: Tuberculosinyl adenosine transferase (296 aa).

This sequence belongs to the diterpene synthase family. Homodimer. Mg(2+) is required as a cofactor.

It catalyses the reaction tuberculosinyl diphosphate + adenosine + H(+) = 1-tuberculosinyladenosine + diphosphate. The enzyme catalyses tuberculosinyl diphosphate + H2O = tuberculosinol + diphosphate. It carries out the reaction tuberculosinyl diphosphate + H2O = (13R)-edaxadiene + diphosphate. The catalysed reaction is tuberculosinyl diphosphate + H2O = (13S)-edaxadiene + diphosphate. Functionally, tuberculosinyl transferase that catalyzes the condensation of adenosine and tuberculosinyl diphosphate (TbPP) to generate 1-tuberculosinyladenosine (1-TbAd), which acts as an antiacid that directly protects M.tuberculosis from acid pH and physically remodels M.tuberculosis phagolysosomes. In addition, acts as a phosphatase that catalyzes the diphosphate-removal from TbPP to produce both tuberculosinol (TOH) and isotuberculosinol (iso-TOH). This Mycobacterium tuberculosis (strain CDC 1551 / Oshkosh) protein is Tuberculosinyl adenosine transferase.